Consider the following 40-residue polypeptide: MIEPILLGMVLGFVPVTIAGLLVAAWLQYKQGNPSGLGEK.

A helical transmembrane segment spans residues 5 to 25 (ILLGMVLGFVPVTIAGLLVAA).

Belongs to the PetG family. In terms of assembly, the 4 large subunits of the cytochrome b6-f complex are cytochrome b6, subunit IV (17 kDa polypeptide, PetD), cytochrome f and the Rieske protein, while the 4 small subunits are PetG, PetL, PetM and PetN. The complex functions as a dimer.

It localises to the cell inner membrane. Its function is as follows. Component of the cytochrome b6-f complex, which mediates electron transfer between photosystem II (PSII) and photosystem I (PSI), cyclic electron flow around PSI, and state transitions. PetG is required for either the stability or assembly of the cytochrome b6-f complex. This chain is Cytochrome b6-f complex subunit 5, found in Gloeobacter violaceus (strain ATCC 29082 / PCC 7421).